Here is a 291-residue protein sequence, read N- to C-terminus: Quinol oxidase subunit 2 (291 aa).

The N-terminal stretch at 1–28 is a signal peptide; the sequence is MQLKKAFWKLASLLPLSLLLFLGGCDKK. Helical transmembrane passes span 49-69 and 91-111; these read SFLLMSLIIAIVFILFTVILI and LEIIWTLVPVIIVIALSIPTV.

Belongs to the cytochrome c oxidase subunit 2 family.

The protein localises to the cell membrane. The enzyme catalyses 2 a quinol + O2 = 2 a quinone + 2 H2O. Catalyzes quinol oxidation with the concomitant reduction of oxygen to water. Subunit II transfers the electrons from a quinol to the binuclear center of the catalytic subunit I. The chain is Quinol oxidase subunit 2 from Bacillus anthracis.